The chain runs to 307 residues: MNYFRTAILLAGLTGLFMGVGYLIGGASGATIALVVAAATNLFAYWNSDRMVLSMYGAHEVDPGTAPDLHRLVAELASRAGLPMPRVFVMDNPQPNAFATGRNPENAAVAVTTGLMQSLSREELAGVIAHELAHIKHHDTLLMTITATIAGAISMLAQFGMFFGGNRDNHGPGIIGSLAMMILAPFGAMLVQMAISRTREYAADEMGARICGQPMWLASALARIENAAHQVPNMEAERAPATAHMFIINPLSGRGMDNLFATHPSTENRIAALQRLAGQSGGGLAPGGPPPDPSSPWNKGSRRGPWG.

The next 2 helical transmembrane spans lie at A7–A27 and S28–S48. H130 contacts Zn(2+). E131 is an active-site residue. Residue H134 coordinates Zn(2+). 2 helical membrane-spanning segments follow: residues I145–G165 and G171–V191. E200 provides a ligand contact to Zn(2+). Residues A277–G307 are disordered.

The protein belongs to the peptidase M48B family. Requires Zn(2+) as cofactor.

It localises to the cell inner membrane. This Nitrobacter winogradskyi (strain ATCC 25391 / DSM 10237 / CIP 104748 / NCIMB 11846 / Nb-255) protein is Protease HtpX homolog.